The sequence spans 590 residues: MPLKPISFRWSKTSVRSVPNPFMYGPDNLNKPLSRASQMAERVHQQTPSSTNYQQRRYFSYYYYQFPKIPRPKRNMLYYSTWSRNPVTNASNANKPSKRHMLPFGSFKISKRSFANANQKLKTKLKKLKMGKERRRFIRWWTVTSLTIVLGGVYAKIKYERGDHEENPYKIRPQSWHLYAYSALPLKTISRLWGQVNSINLPVWIRSPSYRVYSAIFGVNLDEMENPDLSSYKNLSEFFYRDIKPDARPIADGDLVSPADGKVLKFGVVENGEIEQVKGMTYSIDALLGIDTGKLAAPTHSLNFDYNSDDETIVKRDEEFAKINGISYSMDDLVGGNSKSTYHMNELTYKDEHDGTAAGERASFSKELRVAEELTPNPVEYFRKKNLYFAVIYLAPGDYHHFHSPTSWVTTLRRHFIGELFSVAPFFQKTLQGLFVLNERVALLGYWKYGFFSMVPVGATNVGSIVVNFDKDLKTNDIYEHEVYSSASSVNESTPLLDQKDYSANDILTITNSEYEDKKRKKLRKNTVYEATYTNASRLLGGYPLSKGQDIGGFKLGSTVVLVFEAPENFKFNLKVGEKVKVGQSLGGFV.

A mitochondrion-targeting transit peptide spans 1-59 (MPLKPISFRWSKTSVRSVPNPFMYGPDNLNKPLSRASQMAERVHQQTPSSTNYQQRRYF). The Mitochondrial matrix portion of the chain corresponds to 60–140 (SYYYYQFPKI…GKERRRFIRW (81 aa)). A helical transmembrane segment spans residues 141-159 (WTVTSLTIVLGGVYAKIKY). Over 160 to 590 (ERGDHEENPY…KVGQSLGGFV (431 aa)) the chain is Mitochondrial intermembrane. Active-site charge relay system; for autoendoproteolytic cleavage activity residues include aspartate 260, histidine 403, and serine 558. Serine 558 serves as the catalytic Schiff-base intermediate with substrate; via pyruvic acid; for decarboxylase activity. The residue at position 558 (serine 558) is a Pyruvic acid (Ser); by autocatalysis.

It belongs to the phosphatidylserine decarboxylase family. PSD-B subfamily. Eukaryotic type I sub-subfamily. In terms of assembly, heterodimer of a large membrane-associated beta subunit and a small pyruvoyl-containing alpha subunit. The cofactor is pyruvate. In terms of processing, is synthesized initially as an inactive proenzyme. Formation of the active enzyme involves a self-maturation process in which the active site pyruvoyl group is generated from an internal serine residue via an autocatalytic post-translational modification. Two non-identical subunits are generated from the proenzyme in this reaction, and the pyruvate is formed at the N-terminus of the alpha chain, which is derived from the carboxyl end of the proenzyme. The autoendoproteolytic cleavage occurs by a canonical serine protease mechanism, in which the side chain hydroxyl group of the serine supplies its oxygen atom to form the C-terminus of the beta chain, while the remainder of the serine residue undergoes an oxidative deamination to produce ammonia and the pyruvoyl prosthetic group on the alpha chain. During this reaction, the Ser that is part of the protease active site of the proenzyme becomes the pyruvoyl prosthetic group, which constitutes an essential element of the active site of the mature decarboxylase.

The protein localises to the mitochondrion inner membrane. The enzyme catalyses a 1,2-diacyl-sn-glycero-3-phospho-L-serine + H(+) = a 1,2-diacyl-sn-glycero-3-phosphoethanolamine + CO2. It participates in phospholipid metabolism; phosphatidylethanolamine biosynthesis; phosphatidylethanolamine from CDP-diacylglycerol: step 2/2. Its function is as follows. Catalyzes the formation of phosphatidylethanolamine (PtdEtn) from phosphatidylserine (PtdSer). Plays a central role in phospholipid metabolism and in the interorganelle trafficking of phosphatidylserine. Important for virulence. This Candida albicans (strain SC5314 / ATCC MYA-2876) (Yeast) protein is Phosphatidylserine decarboxylase proenzyme 1, mitochondrial.